The chain runs to 317 residues: Probable GTP 3',8-cyclase (317 aa).

In terms of domain architecture, Radical SAM core spans 4–223; sequence RYGRPLEDLR…KSEIREKHFR (220 aa). R13 is a binding site for GTP. [4Fe-4S] cluster contacts are provided by C20, C24, and C27. K61 is a binding site for GTP. S-adenosyl-L-methionine is bound at residue G65. A GTP-binding site is contributed by T91. Residue S115 coordinates S-adenosyl-L-methionine. GTP is bound at residue K152. [4Fe-4S] cluster-binding residues include C246 and C249. 251 to 253 lines the GTP pocket; the sequence is RVR. C263 serves as a coordination point for [4Fe-4S] cluster.

The protein belongs to the radical SAM superfamily. MoaA family. It depends on [4Fe-4S] cluster as a cofactor.

The enzyme catalyses GTP + AH2 + S-adenosyl-L-methionine = (8S)-3',8-cyclo-7,8-dihydroguanosine 5'-triphosphate + 5'-deoxyadenosine + L-methionine + A + H(+). It participates in cofactor biosynthesis; molybdopterin biosynthesis. Functionally, catalyzes the cyclization of GTP to (8S)-3',8-cyclo-7,8-dihydroguanosine 5'-triphosphate. The sequence is that of Probable GTP 3',8-cyclase from Metallosphaera sedula (strain ATCC 51363 / DSM 5348 / JCM 9185 / NBRC 15509 / TH2).